We begin with the raw amino-acid sequence, 446 residues long: MHIIAVGLNFRTAPVEIREKLSFNEQELASAMKTLSGQKSILENIIVSTCNRTEIYAVVDQLHTGRYYVKAFLAEWFGIDKEEFSPYLTIYENDGAIEHLYRVACGLDSMVIGETQILGQVRSSFLLAQEEETIGTVFNQLFKQAVTLAKKAHHETEIGANAVSVSYAAVELAKKIFGDLSSKHVLILGAGKMGQLAVQNLYGSGAKKVTVVNRTFEKAQELANRFSGEAKPFADLQHALSEADILISSTGANDYVVTKQMMSEAERTRKGRPLFMVDIAVPRDLDPELDELETVFLYDIDDLNGIVESNLQERQKAADEIEIMLEAEIVAFKSWLGTLGVVPVISALRQKALTIQAETMKSIDRKLPDLSERERKVLNKHTKSIINQLLRDPIPHAKELAGEKHAEESLELFMKIFNIEQEVALQKEKEEQLHTSITSHSVAYQS.

Residues 49 to 52 (TCNR), S109, 114 to 116 (ETQ), and Q120 each bind substrate. C50 serves as the catalytic Nucleophile. 189-194 (GAGKMG) lines the NADP(+) pocket.

This sequence belongs to the glutamyl-tRNA reductase family. As to quaternary structure, homodimer.

The enzyme catalyses (S)-4-amino-5-oxopentanoate + tRNA(Glu) + NADP(+) = L-glutamyl-tRNA(Glu) + NADPH + H(+). It functions in the pathway porphyrin-containing compound metabolism; protoporphyrin-IX biosynthesis; 5-aminolevulinate from L-glutamyl-tRNA(Glu): step 1/2. Catalyzes the NADPH-dependent reduction of glutamyl-tRNA(Glu) to glutamate 1-semialdehyde (GSA). This chain is Glutamyl-tRNA reductase, found in Priestia megaterium (Bacillus megaterium).